A 380-amino-acid chain; its full sequence is N-acetylaspartylglutamate synthase A (380 aa).

Positions 115–300 (FQELAGHGVP…VGAIIADYAM (186 aa)) constitute an ATP-grasp domain. ATP-binding positions include K154, 189-199 (QKYVKESHGKD), and R215. The Mg(2+) site is built by D260, E273, and N275. The Mn(2+) site is built by D260, E273, and N275. S319 bears the Phosphoserine mark. The disordered stretch occupies residues 345-370 (GSTSSESEPELGEARDSSVKTMGAPP).

The protein belongs to the RimK family. The cofactor is Mg(2+). Requires Mn(2+) as cofactor. Highly expressed in spinal cord and brain.

The protein localises to the cytoplasm. The catalysed reaction is N-acetyl-L-aspartate + L-glutamate + ATP = N-acetyl-L-aspartyl-L-glutamate + ADP + phosphate + H(+). It catalyses the reaction N-acetyl-L-aspartate + 2 L-glutamate + 2 ATP = N-acetyl-L-aspartyl-L-glutamyl-L-glutamate + 2 ADP + 2 phosphate + 2 H(+). Functionally, catalyzes the synthesis of N-acetyl-L-aspartyl-L-glutamate (NAAG) and N-acetyl-L-aspartyl-L-glutamyl-L-glutamate. This is N-acetylaspartylglutamate synthase A (Rimkla) from Mus musculus (Mouse).